Here is a 333-residue protein sequence, read N- to C-terminus: Fe-S cluster assembly protein dre2 (333 aa).

The disordered stretch occupies residues 1–29 (MSPITLDLTSDFNPANTTGAGSSSSQPRT). The segment covering 7–28 (DLTSDFNPANTTGAGSSSSQPR) has biased composition (polar residues). The segment at 23–158 (SSSQPRTLLV…KPDYAEEEAV (136 aa)) is N-terminal SAM-like domain. Residues 159–225 (PLRFGLKRKT…EDTLLTEADL (67 aa)) are linker. [2Fe-2S] cluster-binding residues include C235, C246, C249, and C251. Positions 235–251 (CQPKPGKKRRACKDCTC) are fe-S binding site A. [4Fe-4S] cluster contacts are provided by C296, C299, C307, and C310. 2 consecutive short sequence motifs (cx2C motif) follow at residues 296 to 299 (CGSC) and 307 to 310 (CAGC). Positions 296 to 310 (CGSCALGDAFRCAGC) are fe-S binding site B.

It belongs to the anamorsin family. In terms of assembly, monomer. Interacts with tah18. Interacts with mia40. [2Fe-2S] cluster serves as cofactor. It depends on [4Fe-4S] cluster as a cofactor.

Its subcellular location is the cytoplasm. It localises to the mitochondrion intermembrane space. Its function is as follows. Component of the cytosolic iron-sulfur (Fe-S) protein assembly (CIA) machinery required for the maturation of extramitochondrial Fe-S proteins. Part of an electron transfer chain functioning in an early step of cytosolic Fe-S biogenesis, facilitating the de novo assembly of a [4Fe-4S] cluster on the scaffold complex cfd1-nbp35. Electrons are transferred to dre2 from NADPH via the FAD- and FMN-containing protein tah18. Tah18-dre2 are also required for the assembly of the diferric tyrosyl radical cofactor of ribonucleotide reductase (RNR), probably by providing electrons for reduction during radical cofactor maturation in the catalytic small subunit rnr2. The chain is Fe-S cluster assembly protein dre2 from Neurospora crassa (strain ATCC 24698 / 74-OR23-1A / CBS 708.71 / DSM 1257 / FGSC 987).